The sequence spans 612 residues: Sulfite reductase [NADPH] flavoprotein alpha-component (612 aa).

Residues 64 to 202 (VTLISASQTG…QAQQWRQQVV (139 aa)) enclose the Flavodoxin-like domain. FMN is bound by residues 70–75 (SQTGNA), 117–120 (STQG), and 153–162 (LGDTSYEHFC). The region spanning 247–461 (TAPLTAQLSV…IEHNDNFRLP (215 aa)) is the FAD-binding FR-type domain. FAD is bound by residues threonine 335, lysine 369, 399–402 (RLYS), 417–419 (TVG), tyrosine 423, and 432–435 (GGAS). NADP(+)-binding positions include 532–533 (SR), 538–542 (KIYVQ), and aspartate 574. Tyrosine 612 provides a ligand contact to FAD.

Belongs to the NADPH-dependent sulphite reductase flavoprotein subunit CysJ family. This sequence in the N-terminal section; belongs to the flavodoxin family. The protein in the C-terminal section; belongs to the flavoprotein pyridine nucleotide cytochrome reductase family. As to quaternary structure, alpha(8)-beta(8). The alpha component is a flavoprotein, the beta component is a hemoprotein. FAD is required as a cofactor. Requires FMN as cofactor.

It carries out the reaction hydrogen sulfide + 3 NADP(+) + 3 H2O = sulfite + 3 NADPH + 4 H(+). It participates in sulfur metabolism; hydrogen sulfide biosynthesis; hydrogen sulfide from sulfite (NADPH route): step 1/1. In terms of biological role, component of the sulfite reductase complex that catalyzes the 6-electron reduction of sulfite to sulfide. This is one of several activities required for the biosynthesis of L-cysteine from sulfate. The flavoprotein component catalyzes the electron flow from NADPH -&gt; FAD -&gt; FMN to the hemoprotein component. The protein is Sulfite reductase [NADPH] flavoprotein alpha-component of Yersinia pestis bv. Antiqua (strain Nepal516).